The chain runs to 260 residues: Universal stress protein PHOS34 (260 aa).

The transit peptide at M1–S33 directs the protein to the chloroplast. Positions M1–G42 are disordered. A compositionally biased stretch (basic residues) spans K14–S28. Residue P18 coordinates ATP. A Phosphoserine; by MAPK3 and MAPK6 modification is found at S20. The span at S29–A41 shows a compositional bias: low complexity. V80 is an ATP binding site. Residues G92–D118 form a disordered region. Residues G170–R179 and S187–S189 each bind ATP. The segment at R209 to E260 is disordered. S230 is subject to Phosphoserine. Basic and acidic residues predominate over residues S251–E260.

Belongs to the universal stress protein A family. Phosphorylated by MAPK3 and MAPK6 after pathogenic elicitation (e.g. bacterial flg22, Phytophthora infestans zoospores and xylanase).

The protein resides in the plastid. It localises to the chloroplast. The polypeptide is Universal stress protein PHOS34 (Arabidopsis thaliana (Mouse-ear cress)).